The following is a 600-amino-acid chain: Elongation factor 4 (600 aa).

Residues 5-187 form the tr-type G domain; sequence KYIRNFSIVA…EIVEKIPAPE (183 aa). GTP-binding positions include 17–22 and 134–137; these read DHGKST and NKVD.

The protein belongs to the TRAFAC class translation factor GTPase superfamily. Classic translation factor GTPase family. LepA subfamily.

It localises to the cell membrane. It carries out the reaction GTP + H2O = GDP + phosphate + H(+). Functionally, required for accurate and efficient protein synthesis under certain stress conditions. May act as a fidelity factor of the translation reaction, by catalyzing a one-codon backward translocation of tRNAs on improperly translocated ribosomes. Back-translocation proceeds from a post-translocation (POST) complex to a pre-translocation (PRE) complex, thus giving elongation factor G a second chance to translocate the tRNAs correctly. Binds to ribosomes in a GTP-dependent manner. In Clostridium perfringens (strain 13 / Type A), this protein is Elongation factor 4.